Here is a 42-residue protein sequence, read N- to C-terminus: Gastric inhibitory polypeptide (42 aa).

Belongs to the glucagon family.

It localises to the secreted. Its function is as follows. Potent stimulator of insulin secretion and relatively poor inhibitor of gastric acid secretion. The sequence is that of Gastric inhibitory polypeptide (GIP) from Sus scrofa (Pig).